Consider the following 94-residue polypeptide: Co-chaperonin GroES (94 aa).

Belongs to the GroES chaperonin family. Heptamer of 7 subunits arranged in a ring. Interacts with the chaperonin GroEL.

It is found in the cytoplasm. In terms of biological role, together with the chaperonin GroEL, plays an essential role in assisting protein folding. The GroEL-GroES system forms a nano-cage that allows encapsulation of the non-native substrate proteins and provides a physical environment optimized to promote and accelerate protein folding. GroES binds to the apical surface of the GroEL ring, thereby capping the opening of the GroEL channel. This is Co-chaperonin GroES from Acetivibrio thermocellus (strain ATCC 27405 / DSM 1237 / JCM 9322 / NBRC 103400 / NCIMB 10682 / NRRL B-4536 / VPI 7372) (Clostridium thermocellum).